Reading from the N-terminus, the 179-residue chain is UPF0227 protein Ssed_2836 (179 aa).

Belongs to the UPF0227 family.

The protein is UPF0227 protein Ssed_2836 of Shewanella sediminis (strain HAW-EB3).